We begin with the raw amino-acid sequence, 236 residues long: MKIGIIGAMEPEVAHLIAAMTNTSSQTIADIEFIAGTLAGKDVVVTRSGIGKVAASIATTLLIEKYAPDAVINTGSAGGFVDSLSIGDIVISSEVRHHDVDVTAFGYEIGQMAQQPAAFIPAPYLVEAANKAIAQLGEVRAIEGLICTGDSFICDPVRTKTMLEHFPTMAACEMEGAAIAQVCHQFGVPFVVIRSLSDNANNDSPVDFDAYIVKAGYHSALMVMLLLEQLEPNSVK.

Residue glutamate 12 is the Proton acceptor of the active site. Residues glycine 78, isoleucine 153, and 174–175 contribute to the substrate site; that span reads ME. The active-site Proton donor is aspartate 198.

This sequence belongs to the PNP/UDP phosphorylase family. MtnN subfamily.

The catalysed reaction is S-adenosyl-L-homocysteine + H2O = S-(5-deoxy-D-ribos-5-yl)-L-homocysteine + adenine. It carries out the reaction S-methyl-5'-thioadenosine + H2O = 5-(methylsulfanyl)-D-ribose + adenine. The enzyme catalyses 5'-deoxyadenosine + H2O = 5-deoxy-D-ribose + adenine. It participates in amino-acid biosynthesis; L-methionine biosynthesis via salvage pathway; S-methyl-5-thio-alpha-D-ribose 1-phosphate from S-methyl-5'-thioadenosine (hydrolase route): step 1/2. Catalyzes the irreversible cleavage of the glycosidic bond in both 5'-methylthioadenosine (MTA) and S-adenosylhomocysteine (SAH/AdoHcy) to adenine and the corresponding thioribose, 5'-methylthioribose and S-ribosylhomocysteine, respectively. Also cleaves 5'-deoxyadenosine, a toxic by-product of radical S-adenosylmethionine (SAM) enzymes, into 5-deoxyribose and adenine. The sequence is that of 5'-methylthioadenosine/S-adenosylhomocysteine nucleosidase from Shewanella oneidensis (strain ATCC 700550 / JCM 31522 / CIP 106686 / LMG 19005 / NCIMB 14063 / MR-1).